Consider the following 309-residue polypeptide: MKHKITVGSRDSALALWQTRWVVEQLEKQNPDVTFEITTMKTKGDKMLDVALAKIGDKGLFTKELEVAMLQKEIDFAVHSLKDMPTALPEGLIIGAVCKRDNPGDALISKDGRKLDELPKGARIGTSSLRRCAQLLNYRPDFQLEALRGNLNTRMKKLVSEQLDGIILAAAGITRMGWEDMIAEIIPFQVCLPAVGQGAISVECREDDPEILNLLKGIEHTETKAATEAERSLLRYLEGGCQVPIGAHSEVKNNRLMLTAVVATLDGTKVIRAQGENEVNKAVELGIEVAEKLMAMGGKKILEEVRAGE.

Cys-241 carries the post-translational modification S-(dipyrrolylmethanemethyl)cysteine.

Belongs to the HMBS family. As to quaternary structure, monomer. Dipyrromethane serves as cofactor.

The enzyme catalyses 4 porphobilinogen + H2O = hydroxymethylbilane + 4 NH4(+). The protein operates within porphyrin-containing compound metabolism; protoporphyrin-IX biosynthesis; coproporphyrinogen-III from 5-aminolevulinate: step 2/4. Its function is as follows. Tetrapolymerization of the monopyrrole PBG into the hydroxymethylbilane pre-uroporphyrinogen in several discrete steps. This Desulforamulus reducens (strain ATCC BAA-1160 / DSM 100696 / MI-1) (Desulfotomaculum reducens) protein is Porphobilinogen deaminase.